Here is a 256-residue protein sequence, read N- to C-terminus: Hydroxyacylglutathione hydrolase (256 aa).

Zn(2+) contacts are provided by histidine 57, histidine 59, aspartate 61, histidine 62, histidine 115, aspartate 134, and histidine 172.

This sequence belongs to the metallo-beta-lactamase superfamily. Glyoxalase II family. In terms of assembly, monomer. Zn(2+) is required as a cofactor.

It catalyses the reaction an S-(2-hydroxyacyl)glutathione + H2O = a 2-hydroxy carboxylate + glutathione + H(+). The protein operates within secondary metabolite metabolism; methylglyoxal degradation; (R)-lactate from methylglyoxal: step 2/2. Functionally, thiolesterase that catalyzes the hydrolysis of S-D-lactoyl-glutathione to form glutathione and D-lactic acid. The protein is Hydroxyacylglutathione hydrolase of Jannaschia sp. (strain CCS1).